The following is a 263-amino-acid chain: Pimeloyl-[acyl-carrier protein] methyl ester esterase (263 aa).

Substrate is bound by residues W28, 86 to 87 (SL), and 149 to 153 (FLAIQ). The active-site Nucleophile is the S86. Residues D213 and H240 contribute to the active site. Residue H240 participates in substrate binding.

It belongs to the AB hydrolase superfamily. Carboxylesterase BioH family. In terms of assembly, monomer.

The protein localises to the cytoplasm. The enzyme catalyses 6-carboxyhexanoyl-[ACP] methyl ester + H2O = 6-carboxyhexanoyl-[ACP] + methanol + H(+). It functions in the pathway cofactor biosynthesis; biotin biosynthesis. Its function is as follows. The physiological role of BioH is to remove the methyl group introduced by BioC when the pimeloyl moiety is complete. It allows to synthesize pimeloyl-ACP via the fatty acid synthetic pathway through the hydrolysis of the ester bonds of pimeloyl-ACP esters. The polypeptide is Pimeloyl-[acyl-carrier protein] methyl ester esterase (Shewanella oneidensis (strain ATCC 700550 / JCM 31522 / CIP 106686 / LMG 19005 / NCIMB 14063 / MR-1)).